Here is a 417-residue protein sequence, read N- to C-terminus: Imidazolonepropionase (417 aa).

Residues His77 and His79 each coordinate Fe(3+). Positions 77 and 79 each coordinate Zn(2+). 4-imidazolone-5-propanoate contacts are provided by Arg86, Tyr149, and His182. Residue Tyr149 coordinates N-formimidoyl-L-glutamate. His244 is a binding site for Fe(3+). His244 lines the Zn(2+) pocket. Glu247 lines the 4-imidazolone-5-propanoate pocket. Asp323 provides a ligand contact to Fe(3+). Asp323 is a binding site for Zn(2+). Residue Asn325 participates in N-formimidoyl-L-glutamate binding.

It belongs to the metallo-dependent hydrolases superfamily. HutI family. The cofactor is Zn(2+). Requires Fe(3+) as cofactor.

The protein localises to the cytoplasm. It catalyses the reaction 4-imidazolone-5-propanoate + H2O = N-formimidoyl-L-glutamate. It functions in the pathway amino-acid degradation; L-histidine degradation into L-glutamate; N-formimidoyl-L-glutamate from L-histidine: step 3/3. Functionally, catalyzes the hydrolytic cleavage of the carbon-nitrogen bond in imidazolone-5-propanoate to yield N-formimidoyl-L-glutamate. It is the third step in the universal histidine degradation pathway. The chain is Imidazolonepropionase from Halobacterium salinarum (strain ATCC 29341 / DSM 671 / R1).